A 227-amino-acid polypeptide reads, in one-letter code: ATP synthase F(0) complex subunit a (227 aa).

6 helical membrane passes run 14 to 34, 69 to 89, 98 to 118, 132 to 152, 179 to 199, and 202 to 222; these read YLGI…FPLP, WALL…LGLL, QLSL…IIGL, EGTP…SLFI, VFVL…VLFL, and LLEV…LSLY.

This sequence belongs to the ATPase A chain family. As to quaternary structure, component of the ATP synthase complex composed at least of ATP5F1A/subunit alpha, ATP5F1B/subunit beta, ATP5MC1/subunit c (homooctomer), MT-ATP6/subunit a, MT-ATP8/subunit 8, ATP5ME/subunit e, ATP5MF/subunit f, ATP5MG/subunit g, ATP5MK/subunit k, ATP5MJ/subunit j, ATP5F1C/subunit gamma, ATP5F1D/subunit delta, ATP5F1E/subunit epsilon, ATP5PF/subunit F6, ATP5PB/subunit b, ATP5PD/subunit d, ATP5PO/subunit OSCP. ATP synthase complex consists of a soluble F(1) head domain (subunits alpha(3) and beta(3)) - the catalytic core - and a membrane F(0) domain - the membrane proton channel (subunits c, a, 8, e, f, g, k and j). These two domains are linked by a central stalk (subunits gamma, delta, and epsilon) rotating inside the F1 region and a stationary peripheral stalk (subunits F6, b, d, and OSCP). Interacts with DNAJC30; interaction is direct.

The protein resides in the mitochondrion inner membrane. The enzyme catalyses H(+)(in) = H(+)(out). Subunit a, of the mitochondrial membrane ATP synthase complex (F(1)F(0) ATP synthase or Complex V) that produces ATP from ADP in the presence of a proton gradient across the membrane which is generated by electron transport complexes of the respiratory chain. ATP synthase complex consist of a soluble F(1) head domain - the catalytic core - and a membrane F(1) domain - the membrane proton channel. These two domains are linked by a central stalk rotating inside the F(1) region and a stationary peripheral stalk. During catalysis, ATP synthesis in the catalytic domain of F(1) is coupled via a rotary mechanism of the central stalk subunits to proton translocation. With the subunit c (ATP5MC1), forms the proton-conducting channel in the F(0) domain, that contains two crucial half-channels (inlet and outlet) that facilitate proton movement from the mitochondrial intermembrane space (IMS) into the matrix. Protons are taken up via the inlet half-channel and released through the outlet half-channel, following a Grotthuss mechanism. The chain is ATP synthase F(0) complex subunit a from Formosania lacustris (Oriental stream loach).